A 1573-amino-acid polypeptide reads, in one-letter code: Pentafunctional AROM polypeptide (1573 aa).

The interval 1-384 (MSNESNIITV…YEKHATVVSD (384 aa)) is 3-dehydroquinate synthase. Residues 46–48 (DSN), 83–86 (ESSK), 114–116 (GGV), and aspartate 119 each bind NAD(+). Position 130 (arginine 130) interacts with 7-phospho-2-dehydro-3-deoxy-D-arabino-heptonate. 139–140 (TT) contacts NAD(+). Residues aspartate 146 and lysine 152 each coordinate 7-phospho-2-dehydro-3-deoxy-D-arabino-heptonate. Lysine 161 contributes to the NAD(+) binding site. 7-phospho-2-dehydro-3-deoxy-D-arabino-heptonate is bound at residue asparagine 162. Residues 179–182 (FLHT) and asparagine 190 each bind NAD(+). Glutamate 194 contacts Zn(2+). 7-phospho-2-dehydro-3-deoxy-D-arabino-heptonate-binding positions include 194–197 (EIIK) and lysine 250. Glutamate 260 serves as the catalytic Proton acceptor; for 3-dehydroquinate synthase activity. 7-phospho-2-dehydro-3-deoxy-D-arabino-heptonate-binding positions include 264–268 (RNLLN) and histidine 271. Histidine 271 provides a ligand contact to Zn(2+). Histidine 275 functions as the Proton acceptor; for 3-dehydroquinate synthase activity in the catalytic mechanism. Residues histidine 287 and lysine 356 each contribute to the 7-phospho-2-dehydro-3-deoxy-D-arabino-heptonate site. Histidine 287 serves as a coordination point for Zn(2+). Positions 397–843 (VDEFTKSSWD…WDVLHQSFGV (447 aa)) are EPSP synthase. Cysteine 825 (for EPSP synthase activity) is an active-site residue. Positions 863–1058 (NASIILIGMR…KTKKRSTFLT (196 aa)) are shikimate kinase. Position 870–877 (870–877 (GMRGAGKT)) interacts with ATP. Residues 1059–1280 (LNYPRIEDAL…AAPGQLTVKQ (222 aa)) are 3-dehydroquinase. The Proton acceptor; for 3-dehydroquinate dehydratase activity role is filled by histidine 1182. Lysine 1211 acts as the Schiff-base intermediate with substrate; for 3-dehydroquinate dehydratase activity in catalysis. The segment at 1293-1573 (PEKFFLFGKP…FDAVYQKVIE (281 aa)) is shikimate dehydrogenase.

It in the N-terminal section; belongs to the sugar phosphate cyclases superfamily. Dehydroquinate synthase family. The protein in the 2nd section; belongs to the EPSP synthase family. In the 3rd section; belongs to the shikimate kinase family. This sequence in the 4th section; belongs to the type-I 3-dehydroquinase family. It in the C-terminal section; belongs to the shikimate dehydrogenase family. Homodimer. Zn(2+) serves as cofactor.

The protein resides in the cytoplasm. It carries out the reaction 7-phospho-2-dehydro-3-deoxy-D-arabino-heptonate = 3-dehydroquinate + phosphate. The enzyme catalyses 3-dehydroquinate = 3-dehydroshikimate + H2O. The catalysed reaction is shikimate + NADP(+) = 3-dehydroshikimate + NADPH + H(+). It catalyses the reaction shikimate + ATP = 3-phosphoshikimate + ADP + H(+). It carries out the reaction 3-phosphoshikimate + phosphoenolpyruvate = 5-O-(1-carboxyvinyl)-3-phosphoshikimate + phosphate. It functions in the pathway metabolic intermediate biosynthesis; chorismate biosynthesis; chorismate from D-erythrose 4-phosphate and phosphoenolpyruvate: step 2/7. The protein operates within metabolic intermediate biosynthesis; chorismate biosynthesis; chorismate from D-erythrose 4-phosphate and phosphoenolpyruvate: step 3/7. It participates in metabolic intermediate biosynthesis; chorismate biosynthesis; chorismate from D-erythrose 4-phosphate and phosphoenolpyruvate: step 4/7. Its pathway is metabolic intermediate biosynthesis; chorismate biosynthesis; chorismate from D-erythrose 4-phosphate and phosphoenolpyruvate: step 5/7. It functions in the pathway metabolic intermediate biosynthesis; chorismate biosynthesis; chorismate from D-erythrose 4-phosphate and phosphoenolpyruvate: step 6/7. In terms of biological role, the AROM polypeptide catalyzes 5 consecutive enzymatic reactions in prechorismate polyaromatic amino acid biosynthesis. The polypeptide is Pentafunctional AROM polypeptide (Schizosaccharomyces pombe (strain 972 / ATCC 24843) (Fission yeast)).